Here is a 469-residue protein sequence, read N- to C-terminus: Cell division protein FtsP (469 aa).

Positions 1–29 (MPRLSRRQLLKTAAISTALSTVPAPLLAA) form a signal peptide, tat-type signal. A Plastocyanin-like domain is found at 228-286 (IRLRLLNASLARAYDLRLDNDQEMLLIAQDLSFLPKAKSVKSLVLSPGERAEILVNMNE).

This sequence belongs to the FtsP family. Post-translationally, predicted to be exported by the Tat system. The position of the signal peptide cleavage has not been experimentally proven.

It is found in the periplasm. In terms of biological role, cell division protein that is required for growth during stress conditions. May be involved in protecting or stabilizing the divisomal assembly under conditions of stress. The chain is Cell division protein FtsP from Haemophilus influenzae (strain 86-028NP).